The primary structure comprises 782 residues: Structure-specific endonuclease subunit SLX4 (782 aa).

Disordered stretches follow at residues 63–91 (TPKPVKVSRPGLRKTGSRKSKKNQSMSAM) and 359–425 (KEHE…KKSK). Residues 73 to 84 (GLRKTGSRKSKK) are compositionally biased toward basic residues. The span at 374 to 388 (PAQSLTQSQVPSSID) shows a compositional bias: polar residues.

The protein belongs to the SLX4 family. As to quaternary structure, forms a heterodimer with SLX1. Phosphorylated in response to DNA damage.

It is found in the nucleus. Functionally, regulatory subunit of the SLX1-SLX4 structure-specific endonuclease that resolves DNA secondary structures generated during DNA repair and recombination. Has endonuclease activity towards branched DNA substrates, introducing single-strand cuts in duplex DNA close to junctions with ss-DNA. This is Structure-specific endonuclease subunit SLX4 from Scheffersomyces stipitis (strain ATCC 58785 / CBS 6054 / NBRC 10063 / NRRL Y-11545) (Yeast).